The primary structure comprises 436 residues: GTPase Der (436 aa).

2 consecutive EngA-type G domains span residues 4–165 (NVIA…NFDS) and 172–347 (FKLS…ENLE). GTP contacts are provided by residues 10-17 (GKPNVGKS), 57-61 (DTGGI), 119-122 (NKLD), 178-185 (GQPNSGKS), 225-229 (DTAGI), and 290-293 (NKWD). The region spanning 348 to 432 (REIKPSVLTN…PINIIFKNKS (85 aa)) is the KH-like domain.

Belongs to the TRAFAC class TrmE-Era-EngA-EngB-Septin-like GTPase superfamily. EngA (Der) GTPase family. Associates with the 50S ribosomal subunit.

Functionally, GTPase that plays an essential role in the late steps of ribosome biogenesis. This is GTPase Der from Mycoplasmopsis agalactiae (strain NCTC 10123 / CIP 59.7 / PG2) (Mycoplasma agalactiae).